A 920-amino-acid chain; its full sequence is MGRSNSRSHSSRSKSRSQSSSRSRSRSHSRKKRYSSRSRSRTYSRSRSRDRMYSRDYRRDYRNNRGMRRPYGYRGRGRGYYQGGGGRYHRGGYRPVWNRRHSRSPRRGRSRSRSPKRRSVSSQRSRSRSRRSYRSSRSPRSSSSRSSSPYSKSPVSKRRGSQEKQTKKAEGEPQEESPLKSKSQEEPKDTFEHDPSESIDEFNKSSATSGDIWPGLSAYDNSPRSPHSPSPIATPPSQSSSCSDAPMLSTVHSAKNTPSQHSHSIQHSPERSGSGSVGNGSSRYSPSQNSPIHHIPSRRSPAKTIAPQNAPRDESRGRSSFYPDGGDQETAKTGKFLKRFTDEESRVFLLDRGNTRDKEASKEKGSEKGRAEGEWEDQEALDYFSDKESGKQKFNDSEGDDTEETEDYRQFRKSVLADQGKSFATASHRNTEEEGLKYKSKVSLKGNRESDGFREEKNYKLKETGYVVERPSTTKDKHKEEDKNSERITVKKETQSPEQVKSEKLKDLFDYSPPLHKNLDAREKSTFREESPLRIKMIASDSHRPEVKLKMAPVPLDDSNRPASLTKDRLLASTLVHSVKKEQEFRSIFDHIKLPQASKSTSESFIQHIVSLVHHVKEQYFKSAAMTLNERFTSYQKATEEHSTRQKSPEIHRRIDISPSTLRKHTRLAGEERVFKEENQKGDKKLRCDSADLRHDIDRRRKERSKERGDSKGSRESSGSRKQEKTPKDYKEYKSYKDDSKHKREQDHSRSSSSSASPSSPSSREEKESKKEREEEFKTHHEMKEYSGFAGVSRPRGTFFRIRGRGRARGVFAGTNTGPNNSNTTFQKRPKEEEWDPEYTPKSKKYFLHDDRDDGVDYWAKRGRGRGTFQRGRGRFNFKKSGSSPKWTHDKYQGDGIVEDEEETMENNEEKKDRRKEEKE.

A disordered region spans residues 1–437; sequence MGRSNSRSHS…HRNTEEEGLK (437 aa). Over residues 23–46 the composition is skewed to basic residues; sequence SRSRSHSRKKRYSSRSRSRTYSRS. Over residues 47-63 the composition is skewed to basic and acidic residues; the sequence is RSRDRMYSRDYRRDYRN. A compositionally biased stretch (basic residues) spans 87 to 134; that stretch reads RYHRGGYRPVWNRRHSRSPRRGRSRSRSPKRRSVSSQRSRSRSRRSYR. 2 positions are modified to phosphoserine: Ser-102 and Ser-104. Positions 135–154 are enriched in low complexity; that stretch reads SSRSPRSSSSRSSSPYSKSP. Position 152 is an N6-acetyllysine (Lys-152). The span at 160 to 196 shows a compositional bias: basic and acidic residues; the sequence is GSQEKQTKKAEGEPQEESPLKSKSQEEPKDTFEHDPS. Ser-177 and Ser-181 each carry phosphoserine. Lys-188 participates in a covalent cross-link: Glycyl lysine isopeptide (Lys-Gly) (interchain with G-Cter in SUMO2). Ser-196 and Ser-198 each carry phosphoserine. Position 219 is a phosphotyrosine (Tyr-219). Phosphoserine is present on residues Ser-222, Ser-259, Ser-262, Ser-264, and Ser-268. Residue Tyr-284 is modified to Phosphotyrosine. Ser-285, Ser-290, Ser-297, Ser-300, and Ser-315 each carry phosphoserine. Lys-332 carries the post-translational modification N6-acetyllysine; alternate. A Glycyl lysine isopeptide (Lys-Gly) (interchain with G-Cter in SUMO2); alternate cross-link involves residue Lys-332. Arg-339 carries the post-translational modification Phosphoserine. Residues Thr-341 and Thr-355 each carry the phosphothreonine modification. The segment covering 353-373 has biased composition (basic and acidic residues); the sequence is GNTRDKEASKEKGSEKGRAEG. Tyr-383 bears the Phosphotyrosine mark. The segment covering 384–396 has biased composition (basic and acidic residues); it reads FSDKESGKQKFND. Residues Ser-385, Ser-389, and Ser-397 each carry the phosphoserine modification. Over residues 397-406 the composition is skewed to acidic residues; it reads SEGDDTEETE. At Thr-402 the chain carries Phosphothreonine. A Glycyl lysine isopeptide (Lys-Gly) (interchain with G-Cter in SUMO2) cross-link involves residue Lys-413. Lys-421 is modified (N6-acetyllysine; alternate). Lys-421 participates in a covalent cross-link: Glycyl lysine isopeptide (Lys-Gly) (interchain with G-Cter in SUMO2); alternate. Residues Ser-422 and Ser-427 each carry the phosphoserine modification. Residue Thr-431 is modified to Phosphothreonine. N6-acetyllysine; alternate is present on Lys-437. Lys-437 participates in a covalent cross-link: Glycyl lysine isopeptide (Lys-Gly) (interchain with G-Cter in SUMO2); alternate. At Ser-450 the chain carries Phosphoserine. Glycyl lysine isopeptide (Lys-Gly) (interchain with G-Cter in SUMO2) cross-links involve residues Lys-457 and Lys-462. The interval 464–502 is disordered; sequence TGYVVERPSTTKDKHKEEDKNSERITVKKETQSPEQVKS. Position 472 is a phosphoserine (Ser-472). The segment covering 472–502 has biased composition (basic and acidic residues); it reads STTKDKHKEEDKNSERITVKKETQSPEQVKS. Lys-475 carries the post-translational modification N6-acetyllysine. Glycyl lysine isopeptide (Lys-Gly) (interchain with G-Cter in SUMO2) cross-links involve residues Lys-491 and Lys-492. Residue Thr-494 is modified to Phosphothreonine. Phosphoserine is present on Ser-496. A Glycyl lysine isopeptide (Lys-Gly) (interchain with G-Cter in SUMO2) cross-link involves residue Lys-501. Ser-502, Ser-512, Ser-525, and Ser-531 each carry phosphoserine. Glycyl lysine isopeptide (Lys-Gly) (interchain with G-Cter in SUMO2) cross-links involve residues Lys-536, Lys-548, and Lys-550. Residues Ser-559 and Ser-564 each carry the phosphoserine modification. At Thr-566 the chain carries Phosphothreonine. A Glycyl lysine isopeptide (Lys-Gly) (interchain with G-Cter in SUMO2) cross-link involves residue Lys-567. Ser-578 carries the phosphoserine modification. A Glycyl lysine isopeptide (Lys-Gly) (interchain with G-Cter in SUMO2); alternate cross-link involves residue Lys-580. Lys-580 is covalently cross-linked (Glycyl lysine isopeptide (Lys-Gly) (interchain with G-Cter in SUMO1); alternate). Residues Lys-593, Lys-599, and Lys-622 each participate in a glycyl lysine isopeptide (Lys-Gly) (interchain with G-Cter in SUMO2) cross-link. Positions 637–796 are disordered; the sequence is KATEEHSTRQ…SGFAGVSRPR (160 aa). Over residues 638 to 656 the composition is skewed to basic and acidic residues; it reads ATEEHSTRQKSPEIHRRID. Residues Ser-648, Ser-658, and Ser-660 each carry the phosphoserine modification. At Thr-661 the chain carries Phosphothreonine. Positions 668–750 are enriched in basic and acidic residues; it reads LAGEERVFKE…KHKREQDHSR (83 aa). Residue Lys-676 forms a Glycyl lysine isopeptide (Lys-Gly) (interchain with G-Cter in SUMO2) linkage. 2 positions are modified to phosphoserine: Ser-690 and Ser-760. Residues 751–762 are compositionally biased toward low complexity; it reads SSSSSASPSSPS. Over residues 763–785 the composition is skewed to basic and acidic residues; the sequence is SREEKESKKEREEEFKTHHEMKE. Glycyl lysine isopeptide (Lys-Gly) (interchain with G-Cter in SUMO2) cross-links involve residues Lys-778 and Lys-784. Arg-803 is subject to Citrulline. Arg-809 carries the post-translational modification Omega-N-methylarginine. The segment covering 810-825 has biased composition (low complexity); that stretch reads GVFAGTNTGPNNSNTT. Disordered regions lie at residues 810 to 840 and 862 to 920; these read GVFA…PEYT and RGRG…EEKE. Lys-831 is covalently cross-linked (Glycyl lysine isopeptide (Lys-Gly) (interchain with G-Cter in SUMO2); alternate). Lys-831 participates in a covalent cross-link: Glycyl lysine isopeptide (Lys-Gly) (interchain with G-Cter in SUMO1); alternate. A compositionally biased stretch (acidic residues) spans 897 to 907; it reads IVEDEEETMEN. A compositionally biased stretch (basic and acidic residues) spans 908–920; the sequence is NEEKKDRRKEEKE. Lys-911 is covalently cross-linked (Glycyl lysine isopeptide (Lys-Gly) (interchain with G-Cter in SUMO2)).

The protein belongs to the BCLAF1/THRAP3 family. Interacts with Bcl-2 related proteins, EMD, with the adenovirus E1B 19 kDa protein and with DNA. Component of the SNARP complex which consists at least of SNIP1, SNW1, THRAP3, BCLAF1 and PNN. Component of a MACOM-like complex, named WTAP complex, composed of WTAP, ZC3H13, CBLL1, KIAA1429, RBM15, BCLAF1 and THRAP3. Post-translationally, citrullinated by PADI4. Ubiquitous.

It is found in the cytoplasm. Its subcellular location is the nucleus. The protein resides in the nucleus speckle. The protein localises to the nucleoplasm. Its function is as follows. Death-promoting transcriptional repressor. May be involved in cyclin-D1/CCND1 mRNA stability through the SNARP complex which associates with both the 3'end of the CCND1 gene and its mRNA. This is Bcl-2-associated transcription factor 1 (BCLAF1) from Homo sapiens (Human).